The sequence spans 671 residues: Pescadillo homolog (671 aa).

One can recognise a BRCT domain in the interval 317 to 403 (KVRELFRGLT…LMLPVTGYRI (87 aa)). Residues 548–584 (QALRKAQEKSRQTETSEARLQRKMSEVKRQEAATRKM) are a coiled coil. 2 disordered regions span residues 552 to 578 (KAQEKSRQTETSEARLQRKMSEVKRQE) and 643 to 671 (RRQRAEAKSKKLKERKAGNPYKKLPKWVQ).

The protein belongs to the pescadillo family.

The protein resides in the nucleus. The protein localises to the nucleolus. It localises to the nucleoplasm. Functionally, required for maturation of ribosomal RNAs and formation of the large ribosomal subunit. This is Pescadillo homolog from Leishmania infantum.